Reading from the N-terminus, the 571-residue chain is MNAEEDPKPADSDSSEECIICLSNLPNCPLDQWDSSSVPASISSTLDGLRIAKIPCGHYFHNHCLESWCRVANTCPLCRTEFLKVDVLEFVKGPWYRAYPVEEKTQSVANAGEPFEDEGSETCRCVICGRSDHAEVLLLCDGCDDAYHTYCLNMDAVPIEEFYCPNCVLLNYQENETLSSRISLSRRGQTRRRRVGAAARASRVSQQQQRAWTRAWNAIRNRAWDALNSDLSYYGMQQERLPARDVSSELLRRRIESARLRSNQLNEPVEQPRVVQTPVTNASEQQAWNDFDEILHANSSVHSVATEATISNPRPSSGRFQQTPIEEHHQQDTRFVNDPNSTSHDRRQKRPTRRHIPCSNKSSGSSTVLGNNSSSKSENSFLASLISNINQPSTSRIDTSFMLSLQHEIKNSHSEASDGTSDVHLTPLFSNLSPRPSHVPLSPREISNDNLDDHLIELSEPGEIVDNHLVNDTSMHQRRTSGRHDLVHSSKKVSYETKYRIERLVNAALKPYYREAKISKDQFALFNKNICRSVYTALSDGTLSLEGPQQHKISKTIREKVVNCIQSLSND.

Residues 18–79 (CIICLSNLPN…RVANTCPLCR (62 aa)) form an RING-type 1; atypical zinc finger. Residues 122–170 (TCRCVICGRSDHAEVLLLCDGCDDAYHTYCLNMDAVPIEEFYCPNCVLL) form a PHD-type zinc finger. The segment at 125 to 168 (CVICGRSDHAEVLLLCDGCDDAYHTYCLNMDAVPIEEFYCPNCV) adopts an RING-type 2; degenerate zinc-finger fold. Residues 305–324 (ATEATISNPRPSSGRFQQTP) are compositionally biased toward polar residues. The segment at 305–377 (ATEATISNPR…VLGNNSSSKS (73 aa)) is disordered. Positions 346 to 356 (RRQKRPTRRHI) are enriched in basic residues. Over residues 359-377 (SNKSSGSSTVLGNNSSSKS) the composition is skewed to polar residues.

It is found in the cytoplasm. Its subcellular location is the nucleus. The protein is PHD and RING finger domain-containing protein C126.07c of Schizosaccharomyces pombe (strain 972 / ATCC 24843) (Fission yeast).